The chain runs to 484 residues: MLLADLSSATYTTSSPRLLSKYSAAADLVLRVFDLTMVVASGLIAYRIVFGTWVPAAPYRVAIATTLLYSVICFALFPLYRSWRGRGLLSELVVLGGAFGGVFALFAVHALIVQVGEQVSRGWVGLWFVGGLVSLVAARTLLRGFLNHLRTQGVDVQRVVVVGLRHPVMKISHYLSRNPWVGMNMVGYFRTPYDLAVAEQRQGLPCLGDPDELIEYLKNNQVEQVWISLPLGERDHIKQLLQRLDRYPINVKLVPDLFDFGLLNQSAEQIGSVPVINLRQGGVDRDNYFVVAKALQDKILAVIALMGLWPLMLAIAVGVKMSSPGPVFFRQRRHGLGGREFYMFKFRSMRVHDDHGTTIQQATKNDTRITRFGSFLRRSSLDELPQIFNVLGGSMSIVGPRPHAAQHNTHYEKLINHYMQRHYVKPGITGWAQVNGFRGETPELRTMKKRIQYDLDYIRRWSLWLDIRIIVLTAVRVLGQKTAY.

The next 5 helical transmembrane spans lie at 37–57, 59–79, 93–113, 122–142, and 299–319; these read MVVA…VPAA, YRVA…LFPL, VVLG…ALIV, GWVG…RTLL, and ILAV…AVGV.

It belongs to the bacterial sugar transferase family.

The protein localises to the cell inner membrane. It catalyses the reaction di-trans,octa-cis-undecaprenyl phosphate + UDP-alpha-D-glucose = alpha-D-glucosyl di-trans,octa-cis-undecaprenyl diphosphate + UMP. The protein operates within glycan biosynthesis; xanthan biosynthesis. Is the initiating enzyme for the synthesis of the exopolysaccharide xanthan. Catalyzes the transfer of the glucose-1-phosphate moiety from UDP-Glc onto the carrier lipid undecaprenyl phosphate (C55-P), forming a phosphoanhydride bond yielding to glucosyl-pyrophosphoryl-undecaprenol (Glc-PP-C55). This Xanthomonas campestris pv. campestris protein is UDP-glucose:undecaprenyl-phosphate glucose-1-phosphate transferase (gumD).